Here is a 156-residue protein sequence, read N- to C-terminus: Cell division protein SepF (156 aa).

Basic and acidic residues predominate over residues 23–36 (SYEKEQTDMKKQQD). The tract at residues 23 to 49 (SYEKEQTDMKKQQDPPEQQDVTFPKAQ) is disordered.

This sequence belongs to the SepF family. As to quaternary structure, homodimer. Interacts with FtsZ.

It localises to the cytoplasm. Cell division protein that is part of the divisome complex and is recruited early to the Z-ring. Probably stimulates Z-ring formation, perhaps through the cross-linking of FtsZ protofilaments. Its function overlaps with FtsA. The polypeptide is Cell division protein SepF (Bacillus anthracis (strain CDC 684 / NRRL 3495)).